A 185-amino-acid chain; its full sequence is Ribosome-recycling factor (185 aa).

Belongs to the RRF family.

The protein localises to the cytoplasm. Responsible for the release of ribosomes from messenger RNA at the termination of protein biosynthesis. May increase the efficiency of translation by recycling ribosomes from one round of translation to another. This chain is Ribosome-recycling factor, found in Corynebacterium aurimucosum (strain ATCC 700975 / DSM 44827 / CIP 107346 / CN-1) (Corynebacterium nigricans).